A 149-amino-acid polypeptide reads, in one-letter code: MNADTAPFWRRKTLDQLDSKEWESLCDGCGLCCLQKLEDEEDNSVYYTSIACKLLDLQTCQCSDYPNRFKHVPDCIQLTPGKADQFKWLPPTCGYRLVSEGQDLPAWHHLVSGDRTQVHEQRISRSGRMLSENDVDEDDWEDHLIFRAG.

Belongs to the UPF0260 family.

This chain is UPF0260 protein PSEEN4031, found in Pseudomonas entomophila (strain L48).